A 158-amino-acid polypeptide reads, in one-letter code: Anti-tumor lectin (158 aa).

Position 1 is a blocked amino end (Gln) (Gln1). Residues 12–155 enclose the Galectin domain; sequence TSVDLAAPVT…STVVEAVTYT (144 aa). Asn43, His59, Arg63, Asn72, Arg74, Trp80, and Glu83 together coordinate N-acetyl-alpha-neuraminyl-(2-&gt;3)-beta-D-galactosyl-(1-&gt;4)-beta-D-glucose.

Homodimer. Detected in the fruiting body.

In terms of biological role, anti-tumor lectin with DNase activity. Inhibits the growth of several tumor cell lines in vitro. Induces lymphocyte infiltration and necrosis of tumor cells in a mouse tumor model. Induces apoptosis in HeLa cells. Binds N-acetylneuraminyl lactose (N-acetyl-alpha-neuraminyl-(2-&gt;3)-beta-D-galactosyl-(1-&gt;4)-beta-D-glucose). The sequence is that of Anti-tumor lectin from Cyclocybe aegerita (Black poplar mushroom).